The chain runs to 104 residues: uncharacterized protein (104 aa).

The helical transmembrane segment at 72–92 (LIFSHNIVIIVSPIYMISFII) threads the bilayer.

The protein resides in the membrane. This is an uncharacterized protein from Saccharomyces cerevisiae (strain ATCC 204508 / S288c) (Baker's yeast).